The sequence spans 644 residues: MGKIRKLDDQLSNLIAAGEVVERPASVVKELVENSIDANSTSIEIHLEEAGLSKIRIIDNGDGIAEEDCIVAFERHATSKIKDENDLFRIRTLGFRGEALPSIASVSELELITSTGDAPGTHLSIKGGDIIKQEKTASRKGTDITVQNLFFNTPARLKYMKTIHTELGNITDIVYRIAMSHPEVSLKLFHNEKKLLHTSGNGDVRQVLASIYSIQVAKKLIPIEAESLDFTIKGYVTLPEVTRASRNYMSTIVNGRYVRNFVLMKAIQQGYHTLLPIGRYPIGFLSIEMDPMLVDVNVHPAKLEVRFSKEQELLKLIEETLQSAFKKIQLIPDAGVTTKKKEKDESVQEQFKFEHTKPRESSMPNIVLPTGMDEKQEETTTVKQPAQLWQPPKQEWQPPQSLVREEQSWQPSSKPETVREEKEWTSNDDDFELEELEEEVGEIEEIEMNGNDLPPLYPIGQMHGTYIFAQNDNGLYMIDQHAAQERINYEYFRDKVGRVTQEVQELLVPYRIDLSLTEFLRVEEQLEELKKVGLFLEQFGHQSFIVRSHPTWFPKGQETEIIDEMMEQVVKLKKVDIKKLREEAAIMMSCKASIKANQYLTNDQIFALLEELRTTTNPYTCPHGRPILVHHSTYELEKMFKRVM.

The span at Lys-340 to Glu-360 shows a compositional bias: basic and acidic residues. The disordered stretch occupies residues Lys-340 to Thr-425. Residues Gln-387 to Gln-400 are compositionally biased toward low complexity. The span at Glu-416–Thr-425 shows a compositional bias: basic and acidic residues.

It belongs to the DNA mismatch repair MutL/HexB family.

In terms of biological role, this protein is involved in the repair of mismatches in DNA. It is required for dam-dependent methyl-directed DNA mismatch repair. May act as a 'molecular matchmaker', a protein that promotes the formation of a stable complex between two or more DNA-binding proteins in an ATP-dependent manner without itself being part of a final effector complex. This is DNA mismatch repair protein MutL from Bacillus mycoides (strain KBAB4) (Bacillus weihenstephanensis).